Reading from the N-terminus, the 600-residue chain is Polypeptide N-acetylgalactosaminyltransferase (600 aa).

The Cytoplasmic portion of the chain corresponds to 1 to 7 (MVRRKLR). A helical; Signal-anchor for type II membrane protein membrane pass occupies residues 8–28 (LLVILAGIWLVGIVVYLFKGD). Residues 29–600 (DQSEFEKRVI…KWTFSLSKNR (572 aa)) are Lumenal-facing. 5 disulfides stabilise this stretch: cysteine 154/cysteine 382, cysteine 373/cysteine 451, cysteine 484/cysteine 501, cysteine 524/cysteine 541, and cysteine 567/cysteine 583. A catalytic subdomain A region spans residues 163–268 (LPDTSVIITF…EKWLEPLLDR (106 aa)). Substrate is bound by residues threonine 171, aspartate 204, and arginine 229. Aspartate 252 contributes to the Mn(2+) binding site. Position 253 (serine 253) interacts with substrate. Residue histidine 254 participates in Mn(2+) binding. Residues 328–390 (PIRTPMIAGG…PCSRVGHVFR (63 aa)) are catalytic subdomain B. Tryptophan 359 contributes to the substrate binding site. Histidine 387 lines the Mn(2+) pocket. Substrate-binding residues include arginine 390, histidine 393, and tyrosine 395. In terms of domain architecture, Ricin B-type lectin spans 466–595 (KIPSVQDIAF…SSYTQKWTFS (130 aa)).

Belongs to the glycosyltransferase 2 family. GalNAc-T subfamily. Requires Mn(2+) as cofactor. O-glycosylated.

The protein localises to the golgi apparatus membrane. The catalysed reaction is L-seryl-[protein] + UDP-N-acetyl-alpha-D-galactosamine = a 3-O-[N-acetyl-alpha-D-galactosaminyl]-L-seryl-[protein] + UDP + H(+). It catalyses the reaction L-threonyl-[protein] + UDP-N-acetyl-alpha-D-galactosamine = a 3-O-[N-acetyl-alpha-D-galactosaminyl]-L-threonyl-[protein] + UDP + H(+). Its pathway is protein modification; protein glycosylation. With respect to regulation, no change in activity by addition of up to 10% methanol or glycerol, or 5% acetonitrile. 40% reduction in activity by 10% acetonitrile or by lyophilization. Activity requires divalent cations, the best being Mn(2+) (10-20 mM), followed by Co(2+), Mg(2+) and Ca(2+). Loss of activity with Cu(2+) or in the presence of EDTA. Inhibited by UDP, but not by UMP, UTP, ADP or GDP nucleotides. No inhibition by galactose, N-acetylglucosamine or N-acetylgalactosamine sugars. Catalyzes the initial reaction in O-linked oligosaccharide biosynthesis, the transfer of an N-acetyl-D-galactosamine residue to a serine or threonine residue on the protein receptor. Has a broad substrate specificity. Acceptor peptides include Muc2, Muc5Ac, Muc1a and Muc1a', with Muc2 as the best acceptor. Acts on non-glycosylated and mono- or multi-glycosylated peptide substrates. Transfers preferably to threonine rather than serine residue. Thr-15 is the most preferred site of glycosylation in Muc2 peptide PTTTPITTTTTVTPTPTPTGTQTK having proline residues at position -1, and at positions +1 and +3, where the number represents the distance from the C-terminal and N-terminal hydroxyl amino acid, respectively. Transfer of the N-acetyl-D-galactosamine (GalNAc) is optimal with proline residues at positions -3, -1, +1 and +3, but other amino acids are tolerated, although some, such as phenylalanine, isoleucine or leucine at -1, or lysine at +3 prevent the transfer completely. Second GalNAc is transferred to Muc2 Thr-2 or Thr-13, both of which have two proline residues nearby. Up to nine sites can be glycosylated within Muc2, but eight are used simultaneously since Thr-19 and Thr-21 are not detected to be glycosylated at the same time. Glycosylation is not detected of a potential site, which is next to an already glycosylated site, but only one amino acid is needed in between two glycosylation sites. Ser-5 is the preferred glycosylation site in Muc5Ac peptide GTTPSPVPTTSTTSAP into which up to four GalNAcs can be attached. Only the threonine residues are detected as pontential glycosylation sites in Muc1a APPAHGVTSAPDTRPAPGC and Muc1a' AHGVTSAPDTR peptides. Transferase activity is restricted to UDP-GalNAc as a donor, and none of the nucleotide sugars UDP-Gal, UDP-GlcNAc, GDP-fucose, UDP-xylose, UDP-glucuronic acid or CMP-neuraminic acid are utilized as donors. The protein is Polypeptide N-acetylgalactosaminyltransferase of Biomphalaria glabrata (Bloodfluke planorb).